A 241-amino-acid chain; its full sequence is Chalcone--flavanone isomerase C (241 aa).

Substrate contacts are provided by T50, N115, and S192.

It belongs to the chalcone isomerase family.

It carries out the reaction a chalcone = a flavanone.. Its pathway is secondary metabolite biosynthesis; flavonoid biosynthesis. Its function is as follows. Catalyzes the intramolecular cyclization of bicyclic chalcones into tricyclic (S)-flavanones. Responsible for the isomerization of 4,2',4',6'-tetrahydroxychalcone (also termed chalcone) into naringenin. The sequence is that of Chalcone--flavanone isomerase C (CHI3) from Petunia hybrida (Petunia).